The following is a 256-amino-acid chain: Thiazole synthase (256 aa).

The active-site Schiff-base intermediate with DXP is the lysine 98. 1-deoxy-D-xylulose 5-phosphate-binding positions include glycine 159, 185 to 186 (AG), and 207 to 208 (NT).

It belongs to the ThiG family. As to quaternary structure, homotetramer. Forms heterodimers with either ThiH or ThiS.

It localises to the cytoplasm. It carries out the reaction [ThiS sulfur-carrier protein]-C-terminal-Gly-aminoethanethioate + 2-iminoacetate + 1-deoxy-D-xylulose 5-phosphate = [ThiS sulfur-carrier protein]-C-terminal Gly-Gly + 2-[(2R,5Z)-2-carboxy-4-methylthiazol-5(2H)-ylidene]ethyl phosphate + 2 H2O + H(+). It functions in the pathway cofactor biosynthesis; thiamine diphosphate biosynthesis. Functionally, catalyzes the rearrangement of 1-deoxy-D-xylulose 5-phosphate (DXP) to produce the thiazole phosphate moiety of thiamine. Sulfur is provided by the thiocarboxylate moiety of the carrier protein ThiS. In vitro, sulfur can be provided by H(2)S. This is Thiazole synthase from Aliivibrio salmonicida (strain LFI1238) (Vibrio salmonicida (strain LFI1238)).